Consider the following 327-residue polypeptide: Protein EMSY-LIKE 1 (327 aa).

Residues 1–88 form the ENT domain; it reads METQIHQLEQ…HATIQPFDVL (88 aa). Residues 32–58 are a coiled coil; it reads ESLITELRKELRVSDDEHRELLSRVNK. 2 disordered regions span residues 206–257 and 305–327; these read GHGS…SDDI and ADTS…MPQG. Residues 214–232 show a composition bias toward basic residues; that stretch reads GNRRGQIHGGRGRGPRIHQ. Positions 281-306 form a coiled coil; it reads LELDKAKKMLKEHEQALIAAIARLAD. Residue Ser-308 is modified to Phosphoserine. Over residues 318–327 the composition is skewed to basic and acidic residues; that stretch reads YSHDHPMPQG.

As to quaternary structure, isoform 1 interacts with EDM2 in nucleus.

It localises to the nucleus. Its function is as follows. Probably involved in the regulation of chromatin states. Contributes to RPP7-mediated and basal immunity, especially against Hyaloperonospora arabidopsidis isolate Hiks1. Regulates negatively EDM2-dependent floral transition. This chain is Protein EMSY-LIKE 1, found in Arabidopsis thaliana (Mouse-ear cress).